Consider the following 126-residue polypeptide: MYYPLLSIALGSVLGAWLRWFLGLKLNPIYPQIPLGTVTVNLVGGFIIGFAMAYFAHSDLNPNYKLFVITGFCGALTTFSTFSIEIVTLLQSGKWGMAMLAISIHLIGSLIFTCLGLATYYWVAGH.

4 helical membrane-spanning segments follow: residues 4–24 (PLLS…FLGL), 33–53 (IPLG…FAMA), 67–87 (FVIT…IEIV), and 97–117 (MAML…CLGL). Positions 74 and 77 each coordinate Na(+).

The protein belongs to the fluoride channel Fluc/FEX (TC 1.A.43) family.

The protein resides in the cell inner membrane. It carries out the reaction fluoride(in) = fluoride(out). With respect to regulation, na(+) is not transported, but it plays an essential structural role and its presence is essential for fluoride channel function. Functionally, fluoride-specific ion channel. Important for reducing fluoride concentration in the cell, thus reducing its toxicity. The sequence is that of Fluoride-specific ion channel FluC from Acinetobacter baumannii (strain AB307-0294).